The sequence spans 357 residues: Peptide chain release factor 1 (357 aa).

Gln234 is modified (N5-methylglutamine).

Belongs to the prokaryotic/mitochondrial release factor family. Methylated by PrmC. Methylation increases the termination efficiency of RF1.

The protein resides in the cytoplasm. Functionally, peptide chain release factor 1 directs the termination of translation in response to the peptide chain termination codons UAG and UAA. This is Peptide chain release factor 1 from Chlorobaculum tepidum (strain ATCC 49652 / DSM 12025 / NBRC 103806 / TLS) (Chlorobium tepidum).